Here is a 291-residue protein sequence, read N- to C-terminus: Aspartate carbamoyltransferase catalytic subunit (291 aa).

Residues Arg-47 and Thr-48 each contribute to the carbamoyl phosphate site. L-aspartate is bound at residue Lys-75. Positions 97, 126, and 129 each coordinate carbamoyl phosphate. L-aspartate contacts are provided by Arg-159 and Arg-213. Positions 251 and 252 each coordinate carbamoyl phosphate.

The protein belongs to the aspartate/ornithine carbamoyltransferase superfamily. ATCase family. As to quaternary structure, heterododecamer (2C3:3R2) of six catalytic PyrB chains organized as two trimers (C3), and six regulatory PyrI chains organized as three dimers (R2).

The enzyme catalyses carbamoyl phosphate + L-aspartate = N-carbamoyl-L-aspartate + phosphate + H(+). It participates in pyrimidine metabolism; UMP biosynthesis via de novo pathway; (S)-dihydroorotate from bicarbonate: step 2/3. Its function is as follows. Catalyzes the condensation of carbamoyl phosphate and aspartate to form carbamoyl aspartate and inorganic phosphate, the committed step in the de novo pyrimidine nucleotide biosynthesis pathway. This Aquifex aeolicus (strain VF5) protein is Aspartate carbamoyltransferase catalytic subunit.